The following is a 107-amino-acid chain: Phosphoribosyl-ATP pyrophosphatase (107 aa).

Belongs to the PRA-PH family.

The protein localises to the cytoplasm. It catalyses the reaction 1-(5-phospho-beta-D-ribosyl)-ATP + H2O = 1-(5-phospho-beta-D-ribosyl)-5'-AMP + diphosphate + H(+). Its pathway is amino-acid biosynthesis; L-histidine biosynthesis; L-histidine from 5-phospho-alpha-D-ribose 1-diphosphate: step 2/9. The chain is Phosphoribosyl-ATP pyrophosphatase from Novosphingobium aromaticivorans (strain ATCC 700278 / DSM 12444 / CCUG 56034 / CIP 105152 / NBRC 16084 / F199).